The following is a 441-amino-acid chain: uncharacterized protein (441 aa).

The protein belongs to the outer membrane factor (OMF) (TC 1.B.17) family.

This is an uncharacterized protein from Haemophilus influenzae (strain ATCC 51907 / DSM 11121 / KW20 / Rd).